Consider the following 551-residue polypeptide: Chaperonin GroEL (551 aa).

ATP contacts are provided by residues 30 to 33, Lys51, 87 to 91, Gly415, 479 to 481, and Asp495; these read TLGP, DGTTT, and NAA. The disordered stretch occupies residues 523–551; that stretch reads DSPKEDKSSDMPSPSAGGMGGMGGMGGMM. Positions 539–551 are enriched in gly residues; sequence GGMGGMGGMGGMM.

Belongs to the chaperonin (HSP60) family. As to quaternary structure, forms a cylinder of 14 subunits composed of two heptameric rings stacked back-to-back. Interacts with the co-chaperonin GroES.

The protein resides in the cytoplasm. The catalysed reaction is ATP + H2O + a folded polypeptide = ADP + phosphate + an unfolded polypeptide.. Together with its co-chaperonin GroES, plays an essential role in assisting protein folding. The GroEL-GroES system forms a nano-cage that allows encapsulation of the non-native substrate proteins and provides a physical environment optimized to promote and accelerate protein folding. The sequence is that of Chaperonin GroEL from Buchnera aphidicola subsp. Chaetophorus leucomelas.